A 1160-amino-acid polypeptide reads, in one-letter code: AF4/FMR2 family member 4 (1160 aa).

Basic and acidic residues predominate over residues 1-19 (MNREDRNVLRMKERERRNQ). Disordered regions lie at residues 1–42 (MNRE…YKVT), 78–289 (PKPA…SKAH), 322–908 (WPPP…FDDR), and 1031–1070 (NSYSNSQAPSPGLGSKAVGMPSPVSPKLSPGNSGSYSSGG). Polar residues predominate over residues 115–128 (PSTSQSQKRSSALQ). Serine 120 carries the post-translational modification Phosphoserine. Low complexity predominate over residues 172–189 (RSSSPGKPQAVSSLSSSH). The span at 193-212 (HGNDHHSKEHQRSKSPRDPD) shows a compositional bias: basic and acidic residues. Serine 207 carries the phosphoserine modification. A compositionally biased stretch (low complexity) spans 229 to 247 (SSQSFPPSLMSKSSSMLQK). Polar residues-rich tracts occupy residues 268–280 (EHYSSQSHGNSMT) and 360–370 (YSTAKTSNGHQ). Residues serine 382, serine 383, serine 384, and serine 387 each carry the phosphoserine modification. Positions 398-407 (PRSTPGSNSE) are enriched in polar residues. A compositionally biased stretch (basic and acidic residues) spans 408–424 (PSHHNSEGADNSRDDSS). Positions 425-457 (SHSGSESSSGSDSESESSSSDSEANEPSQSASP) are enriched in low complexity. A phosphoserine mark is found at serine 482, serine 485, and serine 486. 3 stretches are compositionally biased toward polar residues: residues 483–496 (PASSVDSNIPSSQA), 505–523 (GTASNYTDPGGTKETSSAT), and 544–555 (SPAQSDSTTQRR). Serine 544 carries the phosphoserine modification. A compositionally biased stretch (basic and acidic residues) spans 563 to 581 (KKPEKSAAEEPRGGLKIES). Lysine 578 participates in a covalent cross-link: Glycyl lysine isopeptide (Lys-Gly) (interchain with G-Cter in SUMO2). Residues 594-607 (SRHKAATKGSRKPN) are compositionally biased toward basic residues. The segment covering 608–622 (IKKESKSSPRPTAEK) has biased composition (basic and acidic residues). Low complexity predominate over residues 641–657 (TDTSSSDSDGSESLPPS). Serine 666 is modified (phosphoserine). Phosphothreonine is present on threonine 669. 4 positions are modified to phosphoserine: serine 675, serine 689, serine 698, and serine 701. The residue at position 707 (tyrosine 707) is a Phosphotyrosine. Basic and acidic residues-rich tracts occupy residues 725–756 (PYKETEPPKGEKKNVPEKHSREVQKQASEKAS), 764–784 (KNDDDTRASESKKPKTEDKNS), and 794–806 (ESSKQSSTKEKDL). Phosphoserine is present on serine 809. Residue lysine 817 is modified to N6-acetyllysine. Serine 831 is modified (phosphoserine). Composition is skewed to low complexity over residues 831–859 (SQSSSLKSSGTSSKENSGSSSKSSSSSTA) and 880–895 (PNSSSNCPPSTPTSES). 4 positions are modified to phosphoserine: serine 1040, serine 1052, serine 1055, and serine 1059. Over residues 1059–1070 (SPGNSGSYSSGG) the composition is skewed to low complexity.

This sequence belongs to the AF4 family. As to quaternary structure, component of the super elongation complex (SEC), at least composed of EAF1, EAF2, CDK9, MLLT3/AF9, AFF (AFF1 or AFF4), the P-TEFb complex and ELL (ELL, ELL2 or ELL3). Interacts with ELL2; the interaction is direct and leads to stabilize ELL2 and prevent ELL2 ubiquitination and degradation. Interacts with ELL3; the interaction is direct. In terms of processing, dephosphorylated at Ser-544 by the PNUTS-PP1 complex, promoting RNA polymerase II transcription pause-release. Highly expressed in testis by Sertoli cells, and at low levels in other tissues.

Its subcellular location is the nucleus. It is found in the chromosome. Functionally, key component of the super elongation complex (SEC), a complex required to increase the catalytic rate of RNA polymerase II transcription by suppressing transient pausing by the polymerase at multiple sites along the DNA. In the SEC complex, AFF4 acts as a central scaffold that recruits other factors through direct interactions with ELL proteins (ELL, ELL2 or ELL3) and the P-TEFb complex. The protein is AF4/FMR2 family member 4 (Aff4) of Mus musculus (Mouse).